The chain runs to 463 residues: Succinate--CoA ligase [ADP-forming] subunit beta, mitochondrial (463 aa).

A mitochondrion-targeting transit peptide spans 1–53 (MAASMFYGRQLAAAALRSHRPQTTLRAAAQVLGNSGLFNKHGLQVQQQQQRTL). Positions 61 to 288 (MELLQEAGVS…SNSAYRQKKI (228 aa)) constitute an ATP-grasp domain. N6-acetyllysine is present on K78. Y84 bears the Phosphotyrosine mark. K88 carries the N6-acetyllysine; alternate modification. N6-succinyllysine; alternate is present on K88. Residues K98 and 105–107 (GRG) contribute to the ATP site. Residues K129, K139, K143, and K216 each carry the N6-acetyllysine modification. N258 and D272 together coordinate Mg(2+). S279 is modified (phosphoserine). N323 provides a ligand contact to substrate. Residue T341 is modified to Phosphothreonine. K368 is subject to N6-acetyllysine. 380-382 (GIM) is a substrate binding site. Position 438 is an N6-acetyllysine (K438).

The protein belongs to the succinate/malate CoA ligase beta subunit family. ATP-specific subunit beta subfamily. In terms of assembly, heterodimer of an alpha and a beta subunit. The beta subunit determines specificity for ATP. Interacts with ALAS2. Mg(2+) serves as cofactor.

The protein resides in the mitochondrion. It carries out the reaction succinate + ATP + CoA = succinyl-CoA + ADP + phosphate. The protein operates within carbohydrate metabolism; tricarboxylic acid cycle; succinate from succinyl-CoA (ligase route): step 1/1. In terms of biological role, ATP-specific succinyl-CoA synthetase functions in the citric acid cycle (TCA), coupling the hydrolysis of succinyl-CoA to the synthesis of ATP and thus represents the only step of substrate-level phosphorylation in the TCA. The beta subunit provides nucleotide specificity of the enzyme and binds the substrate succinate, while the binding sites for coenzyme A and phosphate are found in the alpha subunit. This is Succinate--CoA ligase [ADP-forming] subunit beta, mitochondrial from Mus musculus (Mouse).